Reading from the N-terminus, the 528-residue chain is Biotin carboxylase 1, chloroplastic (528 aa).

Residues 1–51 (MEATLPVCKSVTSTPGLFMGKTSGIRSSQCSFMMGNKVNFPRQRAQTAHVH) constitute a chloroplast transit peptide. Residues lysine 179, lysine 221, 227–228 (GG), 263–266 (EKYV), and histidine 271 each bind ATP. One can recognise an ATP-grasp domain in the interval 183–380 (RETMKKAGVP…LIEEQIRVAM (198 aa)). Lysine 300 is a hydrogencarbonate binding site. ATP contacts are provided by glutamate 338 and glutamate 351. Residues glutamate 338, glutamate 351, and asparagine 353 each coordinate Mg(2+). Mn(2+)-binding residues include glutamate 338, glutamate 351, and asparagine 353. Positions 355, 358, and 401 each coordinate hydrogencarbonate. Arginine 355 is an active-site residue. Arginine 401 is a biotin binding site.

As to quaternary structure, acetyl-CoA carboxylase is a heterohexamer composed of biotin carboxyl carrier protein, biotin carboxylase and two subunits each of ACCase subunit alpha and ACCase plastid-coded subunit beta (accD). Mg(2+) serves as cofactor. The cofactor is Mn(2+).

It is found in the plastid. The protein localises to the chloroplast. It carries out the reaction N(6)-biotinyl-L-lysyl-[protein] + hydrogencarbonate + ATP = N(6)-carboxybiotinyl-L-lysyl-[protein] + ADP + phosphate + H(+). It functions in the pathway lipid metabolism; malonyl-CoA biosynthesis; malonyl-CoA from acetyl-CoA: step 1/1. This protein is a component of the acetyl coenzyme A carboxylase complex; first, biotin carboxylase catalyzes the carboxylation of the carrier protein and then the transcarboxylase transfers the carboxyl group to form malonyl-CoA. The chain is Biotin carboxylase 1, chloroplastic from Populus trichocarpa (Western balsam poplar).